A 280-amino-acid chain; its full sequence is Phosphatidylserine decarboxylase proenzyme (280 aa).

Catalysis depends on charge relay system; for autoendoproteolytic cleavage activity residues D88, H145, and S249. The active-site Schiff-base intermediate with substrate; via pyruvic acid; for decarboxylase activity is the S249. The residue at position 249 (S249) is a Pyruvic acid (Ser); by autocatalysis.

This sequence belongs to the phosphatidylserine decarboxylase family. PSD-B subfamily. Prokaryotic type I sub-subfamily. As to quaternary structure, heterodimer of a large membrane-associated beta subunit and a small pyruvoyl-containing alpha subunit. It depends on pyruvate as a cofactor. Is synthesized initially as an inactive proenzyme. Formation of the active enzyme involves a self-maturation process in which the active site pyruvoyl group is generated from an internal serine residue via an autocatalytic post-translational modification. Two non-identical subunits are generated from the proenzyme in this reaction, and the pyruvate is formed at the N-terminus of the alpha chain, which is derived from the carboxyl end of the proenzyme. The autoendoproteolytic cleavage occurs by a canonical serine protease mechanism, in which the side chain hydroxyl group of the serine supplies its oxygen atom to form the C-terminus of the beta chain, while the remainder of the serine residue undergoes an oxidative deamination to produce ammonia and the pyruvoyl prosthetic group on the alpha chain. During this reaction, the Ser that is part of the protease active site of the proenzyme becomes the pyruvoyl prosthetic group, which constitutes an essential element of the active site of the mature decarboxylase.

Its subcellular location is the cell membrane. The enzyme catalyses a 1,2-diacyl-sn-glycero-3-phospho-L-serine + H(+) = a 1,2-diacyl-sn-glycero-3-phosphoethanolamine + CO2. Its pathway is phospholipid metabolism; phosphatidylethanolamine biosynthesis; phosphatidylethanolamine from CDP-diacylglycerol: step 2/2. Functionally, catalyzes the formation of phosphatidylethanolamine (PtdEtn) from phosphatidylserine (PtdSer). This Chromobacterium violaceum (strain ATCC 12472 / DSM 30191 / JCM 1249 / CCUG 213 / NBRC 12614 / NCIMB 9131 / NCTC 9757 / MK) protein is Phosphatidylserine decarboxylase proenzyme.